Consider the following 211-residue polypeptide: MTKTLYITAHPHDERASYSMAAGKAFIESYKEAHPDDEVIHLDLYRENIPQIDADVFSGWGKLQSGSGFEQLSEHEKAKVGRLNELSEQFIAGDKYVFVTPLWNFSFPPVMKAYFDAVAVAGKTFKYTEQGPIGLLTDKKALHIQARGGYYSEGQAAELEMGHRYISIMMQFFGVPEFEGLFIEGHNAEPDKAEEIKQNAIVRAKELGRTF.

17-19 is an FMN binding site; it reads SYS.

This sequence belongs to the azoreductase type 1 family. Homodimer. Requires FMN as cofactor.

The enzyme catalyses 2 a quinone + NADH + H(+) = 2 a 1,4-benzosemiquinone + NAD(+). It catalyses the reaction N,N-dimethyl-1,4-phenylenediamine + anthranilate + 2 NAD(+) = 2-(4-dimethylaminophenyl)diazenylbenzoate + 2 NADH + 2 H(+). In terms of biological role, quinone reductase that provides resistance to thiol-specific stress caused by electrophilic quinones. Functionally, also exhibits azoreductase activity. Catalyzes the reductive cleavage of the azo bond in aromatic azo compounds to the corresponding amines. This chain is FMN-dependent NADH:quinone oxidoreductase 2, found in Bacillus licheniformis (strain ATCC 14580 / DSM 13 / JCM 2505 / CCUG 7422 / NBRC 12200 / NCIMB 9375 / NCTC 10341 / NRRL NRS-1264 / Gibson 46).